The primary structure comprises 426 residues: L-cysteine:1D-myo-inositol 2-amino-2-deoxy-alpha-D-glucopyranoside ligase (426 aa).

Position 45 (cysteine 45) interacts with Zn(2+). L-cysteinyl-5'-AMP-binding positions include 45 to 48, threonine 60, and 83 to 85; these read CGIT and NVT. Residues 47 to 57 carry the 'HIGH' region motif; the sequence is ITPYDATHIGH. Positions 199–204 match the 'ERGGDP' region motif; it reads ERGGDP. Residue tryptophan 239 coordinates L-cysteinyl-5'-AMP. Residue cysteine 243 coordinates Zn(2+). Residue 261–263 participates in L-cysteinyl-5'-AMP binding; sequence GSD. Histidine 268 provides a ligand contact to Zn(2+). Position 294 (valine 294) interacts with L-cysteinyl-5'-AMP. Positions 300-304 match the 'KMSKS' region motif; that stretch reads KMSKS.

This sequence belongs to the class-I aminoacyl-tRNA synthetase family. MshC subfamily. As to quaternary structure, monomer. Zn(2+) is required as a cofactor.

It carries out the reaction 1D-myo-inositol 2-amino-2-deoxy-alpha-D-glucopyranoside + L-cysteine + ATP = 1D-myo-inositol 2-(L-cysteinylamino)-2-deoxy-alpha-D-glucopyranoside + AMP + diphosphate + H(+). In terms of biological role, catalyzes the ATP-dependent condensation of GlcN-Ins and L-cysteine to form L-Cys-GlcN-Ins. The chain is L-cysteine:1D-myo-inositol 2-amino-2-deoxy-alpha-D-glucopyranoside ligase from Clavibacter michiganensis subsp. michiganensis (strain NCPPB 382).